Reading from the N-terminus, the 206-residue chain is Large ribosomal subunit protein uL4 (206 aa).

Residues 45-85 (QGNRAQKDREQVKHTTKKPWRQKGTGRARAGMSSSPLWRGG) are disordered. Basic residues predominate over residues 58–70 (HTTKKPWRQKGTG).

Belongs to the universal ribosomal protein uL4 family. Part of the 50S ribosomal subunit.

Its function is as follows. One of the primary rRNA binding proteins, this protein initially binds near the 5'-end of the 23S rRNA. It is important during the early stages of 50S assembly. It makes multiple contacts with different domains of the 23S rRNA in the assembled 50S subunit and ribosome. Forms part of the polypeptide exit tunnel. The polypeptide is Large ribosomal subunit protein uL4 (Burkholderia mallei (strain NCTC 10247)).